The following is a 264-amino-acid chain: uncharacterized protein (264 aa).

The tract at residues 235–264 (ESSDEEDNDDDIINNDTNNDINNDDIEIKT) is disordered. Positions 237–247 (SDEEDNDDDII) are enriched in acidic residues.

This is an uncharacterized protein from Acanthamoeba polyphaga mimivirus (APMV).